Consider the following 645-residue polypeptide: Exoribonuclease 2 (645 aa).

In terms of domain architecture, RNB spans 191–517; the sequence is REDLTELNFI…MNHRLLKALI (327 aa). Residues 563 to 645 enclose the S1 motif domain; that stretch reads HIRYSAEIID…DNRSIIAKIV (83 aa).

This sequence belongs to the RNR ribonuclease family. RNase II subfamily.

Its subcellular location is the cytoplasm. The enzyme catalyses Exonucleolytic cleavage in the 3'- to 5'-direction to yield nucleoside 5'-phosphates.. Its function is as follows. Involved in mRNA degradation. Hydrolyzes single-stranded polyribonucleotides processively in the 3' to 5' direction. The protein is Exoribonuclease 2 of Baumannia cicadellinicola subsp. Homalodisca coagulata.